The following is a 385-amino-acid chain: WD repeat-containing protein RUP1 (385 aa).

WD repeat units lie at residues 69–108 (TGSD…ESRD), 119–160 (CTPA…PVSE), 163–205 (EHGG…TLEE), 210–250 (GGGA…DPLI), 254–292 (GHTK…RVVR), 298–337 (VNSR…PVWV), and 348–385 (SDRR…GKQS).

In terms of assembly, interacts with UVR8. Interacts directly with DHU1.

It is found in the nucleus. The protein resides in the cytoplasm. Its subcellular location is the cytosol. In terms of biological role, functions in association with RUP2 as repressor of UV-B-induced photomorphogenesis mediated by UVR8 and HY5, likely in coordination with DHU1. Plays a crucial negative feedback regulatory role downstream of UVR8-COP1 to inhibit UVR8 function, balance UV-B-specific responses and ensure normal plant growth. Is involved in the regulation of photoperiodic flowering and vegetative development. This chain is WD repeat-containing protein RUP1, found in Arabidopsis thaliana (Mouse-ear cress).